The chain runs to 170 residues: Non-classical export protein 102 (170 aa).

The Cytoplasmic segment spans residues 1 to 11 (MLAIGDVILRA). The 136-residue stretch at 6-141 (DVILRAFNFV…TFIFIASAIF (136 aa)) folds into the MARVEL domain. A helical membrane pass occupies residues 12–32 (FNFVFLVIALGLTGSLAATTI). The Extracellular segment spans residues 33-38 (TQHNPQ). Residues 39 to 61 (INFAVFAAAFGLLTSSFYGVFAY) traverse the membrane as a helical segment. Residues 62–76 (FVAAFAWPVILFVFD) lie on the Cytoplasmic side of the membrane. The chain crosses the membrane as a helical span at residues 77-97 (FLNFVFTFAAATAIAAGIRAH). Over 98 to 125 (SCSNQDYLDDNNIAQGSSGRCRKAQAST) the chain is Extracellular. A helical membrane pass occupies residues 126-146 (AFLYFSTFIFIASAIFSAISL). Residues 147–170 (SKGGLFGHSSRPAPRTGVPTMSQV) are Cytoplasmic-facing.

Belongs to the NCE102 family.

It localises to the cell membrane. Involved in membrane organization. Involved in a novel pathway of export of proteins that lack a cleavable signal sequence. Non-classical export pathway also functions as an alternative clearance/detoxification pathway to eliminate damaged material, when the basic repair pathway is not sufficient. Regulates actin organization and subsequent morphogenesis and pathogenesis. The protein is Non-classical export protein 102 of Candida albicans (strain SC5314 / ATCC MYA-2876) (Yeast).